The sequence spans 411 residues: LL-diaminopimelate aminotransferase (411 aa).

Substrate contacts are provided by tyrosine 16 and glycine 43. Pyridoxal 5'-phosphate contacts are provided by residues tyrosine 73, 109–110 (AK), tyrosine 133, asparagine 188, tyrosine 219, and 247–249 (SFS). The substrate site is built by lysine 110, tyrosine 133, and asparagine 188. Residue lysine 250 is modified to N6-(pyridoxal phosphate)lysine. Pyridoxal 5'-phosphate is bound by residues arginine 258 and asparagine 293. Substrate-binding residues include asparagine 293 and arginine 389.

The protein belongs to the class-I pyridoxal-phosphate-dependent aminotransferase family. LL-diaminopimelate aminotransferase subfamily. In terms of assembly, homodimer. It depends on pyridoxal 5'-phosphate as a cofactor.

The catalysed reaction is (2S,6S)-2,6-diaminopimelate + 2-oxoglutarate = (S)-2,3,4,5-tetrahydrodipicolinate + L-glutamate + H2O + H(+). It participates in amino-acid biosynthesis; L-lysine biosynthesis via DAP pathway; LL-2,6-diaminopimelate from (S)-tetrahydrodipicolinate (aminotransferase route): step 1/1. In terms of biological role, involved in the synthesis of meso-diaminopimelate (m-DAP or DL-DAP), required for both lysine and peptidoglycan biosynthesis. Catalyzes the direct conversion of tetrahydrodipicolinate to LL-diaminopimelate. In Methanobrevibacter smithii (strain ATCC 35061 / DSM 861 / OCM 144 / PS), this protein is LL-diaminopimelate aminotransferase.